Here is a 716-residue protein sequence, read N- to C-terminus: Splicing factor Cactin (716 aa).

Positions 1–104 (MGSHGKGKRD…SKKAQKKALR (104 aa)) are disordered. Positions 10 to 22 (DRSGRQKKRRDES) are enriched in basic and acidic residues. Over residues 25–45 (GSESESYTSDSDGSDDLSPPR) the composition is skewed to low complexity. Over residues 46-61 (SSRRKKGSSSRRTRRR) the composition is skewed to basic residues. Over residues 81 to 95 (SSKDYSEEKVTEYMS) the composition is skewed to basic and acidic residues. Positions 153-201 (SVKAEKRRHRERMTEVEKVKKRREERAVEKARHEEEMALLARERARAEF) form a coiled coil. S450 carries the phosphoserine modification. The interval 466–525 (VEENEEEINDTNLSDAEEAFSPEPVAEEEEADEAAEAAGSFSPELMHGDDREEAIDPEED) is disordered. Residues 468–500 (ENEEEINDTNLSDAEEAFSPEPVAEEEEADEAA) show a composition bias toward acidic residues.

This sequence belongs to the CACTIN family. In terms of assembly, interacts with At5g63440.

It localises to the nucleus speckle. Its function is as follows. Plays a role in pre-mRNA splicing by facilitating excision of a subset of introns. Required for embryogenesis. This is Splicing factor Cactin (CTN) from Arabidopsis thaliana (Mouse-ear cress).